A 300-amino-acid polypeptide reads, in one-letter code: Acetaldehyde dehydrogenase 3 (300 aa).

Residue 11-14 (SGNI) participates in NAD(+) binding. The active-site Acyl-thioester intermediate is Cys-126. NAD(+)-binding positions include 157–165 (SAGPGTRAN) and Asn-276.

Belongs to the acetaldehyde dehydrogenase family.

It carries out the reaction acetaldehyde + NAD(+) + CoA = acetyl-CoA + NADH + H(+). In Rhodococcus opacus (strain B4), this protein is Acetaldehyde dehydrogenase 3.